Consider the following 233-residue polypeptide: Protein Mis18-alpha (233 aa).

Serine 36, serine 39, and serine 40 each carry phosphoserine. The 99-residue stretch at 80–178 (PLVFLCSGCR…SVEAIESYVL (99 aa)) folds into the Mis18 domain. Residues cysteine 85, cysteine 88, cysteine 141, and cysteine 144 each contribute to the Zn(2+) site. Residue lysine 162 forms a Glycyl lysine isopeptide (Lys-Gly) (interchain with G-Cter in SUMO2) linkage. A Phosphoserine modification is found at serine 233.

It belongs to the mis18 family. In terms of assembly, homodimer, and heterodimer with OIP5/MIS18B. Identified in a complex containing MIS18A, OIP5/MIS18B, MIS18BP1, RBBP7 and RBBP4. In terms of tissue distribution, detected in testis.

The protein localises to the nucleus. It is found in the chromosome. It localises to the centromere. In terms of biological role, required for recruitment of CENPA to centromeres and normal chromosome segregation during mitosis. This Homo sapiens (Human) protein is Protein Mis18-alpha (MIS18A).